The chain runs to 254 residues: Large ribosomal subunit protein uL2 (254 aa).

The protein belongs to the universal ribosomal protein uL2 family. Component of the large ribosomal subunit. Mature ribosomes consist of a small (40S) and a large (60S) subunit. The 40S subunit contains about 32 different proteins and 1 molecule of RNA (18S). The 60S subunit contains 45 different proteins and 3 molecules of RNA (25S, 5.8S and 5S).

The protein localises to the cytoplasm. Functionally, component of the ribosome, a large ribonucleoprotein complex responsible for the synthesis of proteins in the cell. The small ribosomal subunit (SSU) binds messenger RNAs (mRNAs) and translates the encoded message by selecting cognate aminoacyl-transfer RNA (tRNA) molecules. The large subunit (LSU) contains the ribosomal catalytic site termed the peptidyl transferase center (PTC), which catalyzes the formation of peptide bonds, thereby polymerizing the amino acids delivered by tRNAs into a polypeptide chain. The nascent polypeptides leave the ribosome through a tunnel in the LSU and interact with protein factors that function in enzymatic processing, targeting, and the membrane insertion of nascent chains at the exit of the ribosomal tunnel. The sequence is that of Large ribosomal subunit protein uL2 from Candida albicans (strain SC5314 / ATCC MYA-2876) (Yeast).